We begin with the raw amino-acid sequence, 186 residues long: C-type lectin 37Da (186 aa).

The first 20 residues, 1-20 (MLKTLVQLFLVVAGFAPGFG), serve as a signal peptide directing secretion. N-linked (GlcNAc...) asparagine glycosylation is found at N35 and N47. The 124-residue stretch at 46 to 169 (INESYYVFGQ…CHNHASSLFK (124 aa)) folds into the C-type lectin domain. A disulfide bridge links C140 with C160.

The protein resides in the secreted. In terms of biological role, galactose-specific lectin that displays calcium-dependent activity. Binds to the surface of hemocytes and enhances hemocyte encapsulation and melanization. This is likely by interacting with carbohydrates on the surface of the hemocytes. Also displays agglutination activity against the Gram-negative bacterium E.coli. This chain is C-type lectin 37Da, found in Drosophila melanogaster (Fruit fly).